The chain runs to 350 residues: Thymidine kinase (350 aa).

Residue 17–24 (GPFGIGKT) participates in ATP binding. E45 (proton acceptor) is an active-site residue. Q86 lines the substrate pocket. R176 contributes to the ATP binding site. Position 182 (R182) interacts with substrate.

The protein belongs to the herpesviridae thymidine kinase family. As to quaternary structure, homodimer.

The catalysed reaction is thymidine + ATP = dTMP + ADP + H(+). Catalyzes the transfer of the gamma-phospho group of ATP to thymidine to generate dTMP in the salvage pathway of pyrimidine synthesis. The dTMP serves as a substrate for DNA polymerase during viral DNA replication. Allows the virus to be reactivated and to grow in non-proliferative cells lacking a high concentration of phosphorylated nucleic acid precursors. The polypeptide is Thymidine kinase (Gallus gallus (Chicken)).